A 129-amino-acid polypeptide reads, in one-letter code: UPF0212 protein MA_1372 (129 aa).

It belongs to the UPF0212 family.

This chain is UPF0212 protein MA_1372, found in Methanosarcina acetivorans (strain ATCC 35395 / DSM 2834 / JCM 12185 / C2A).